The sequence spans 291 residues: ATP synthase subunit a (291 aa).

The next 6 helical transmembrane spans lie at leucine 50–valine 70, isoleucine 108–isoleucine 128, aspartate 161–isoleucine 181, proline 203–alanine 223, leucine 241–tryptophan 261, and alanine 262–valine 282.

It belongs to the ATPase A chain family. As to quaternary structure, F-type ATPases have 2 components, CF(1) - the catalytic core - and CF(0) - the membrane proton channel. CF(1) has five subunits: alpha(3), beta(3), gamma(1), delta(1), epsilon(1). CF(0) has three main subunits: a(1), b(2) and c(9-12). The alpha and beta chains form an alternating ring which encloses part of the gamma chain. CF(1) is attached to CF(0) by a central stalk formed by the gamma and epsilon chains, while a peripheral stalk is formed by the delta and b chains.

The protein resides in the cell inner membrane. Its function is as follows. Key component of the proton channel; it plays a direct role in the translocation of protons across the membrane. This chain is ATP synthase subunit a, found in Acinetobacter baumannii (strain SDF).